The chain runs to 131 residues: Small ribosomal subunit protein uS8 (131 aa).

This sequence belongs to the universal ribosomal protein uS8 family. Part of the 30S ribosomal subunit. Contacts proteins S5 and S12.

In terms of biological role, one of the primary rRNA binding proteins, it binds directly to 16S rRNA central domain where it helps coordinate assembly of the platform of the 30S subunit. This chain is Small ribosomal subunit protein uS8, found in Clostridium novyi (strain NT).